Reading from the N-terminus, the 337-residue chain is MSQPPAAHVPVLYTQVLDGLQVTENGTYLDGTFGRGGHARGVLEHLGPGGRLLVMDKDPEAIAVAEQTFGGDARVSIHRGSFAGLGQVVAAATVDGILLDLGVSSPQLEVAGRGFSFGKDGPLDMRMDPDSGQSAAQWLAQATDREIADVLWTYGEERQSRRIARAIVARRAEQPLLRTAQLADLIASVMPRGDSKTHPATRSFQAIRIYINRELDDLETGLDAALAALKPGGRLAVISFHSLEDRIVKQFMARYAKAPPSNRRLPEAQPFVPTLQLVSGAIKADDAELNVNPRARSAVLRVAEKLELRIGDSLLERRSGRIPNPQSPIPASQGDAR.

S-adenosyl-L-methionine-binding positions include 36–38, Asp-56, Phe-82, Asp-100, and Gln-107; that span reads GGH. The interval 317-337 is disordered; sequence RRSGRIPNPQSPIPASQGDAR.

The protein belongs to the methyltransferase superfamily. RsmH family.

The protein localises to the cytoplasm. The enzyme catalyses cytidine(1402) in 16S rRNA + S-adenosyl-L-methionine = N(4)-methylcytidine(1402) in 16S rRNA + S-adenosyl-L-homocysteine + H(+). Its function is as follows. Specifically methylates the N4 position of cytidine in position 1402 (C1402) of 16S rRNA. The polypeptide is Ribosomal RNA small subunit methyltransferase H (Xanthomonas oryzae pv. oryzae (strain KACC10331 / KXO85)).